The primary structure comprises 459 residues: Hepatocyte nuclear factor 3-beta (459 aa).

The segment at 14-93 (DWSSYYAEPE…AGAMAGMSGS (80 aa)) is transactivation domain 1. The short motif at 106–113 (LSPSLSPL) is the Nuclear localization signal element. Phosphothreonine is present on threonine 156. The segment at residues 159 to 252 (KPPYSYISLI…FENGCYLRRQ (94 aa)) is a DNA-binding region (fork-head). Serine 212 bears the Phosphoserine mark. A compositionally biased stretch (low complexity) spans 268–281 (GAASSGGKKTAPGS). The disordered stretch occupies residues 268-366 (GAASSGGKKT…PGLPPEAHLK (99 aa)). The residue at position 284 (serine 284) is a Phosphoserine. Residues 295–311 (ASETPAGTESPHSSASP) are compositionally biased toward polar residues. Position 302 is a phosphothreonine (threonine 302). 4 positions are modified to phosphoserine: serine 304, serine 307, serine 308, and serine 310. Over residues 340 to 353 (PGQQQQAAAHLLGP) the composition is skewed to low complexity. A transactivation domain 2 region spans residues 362–459 (EAHLKPEHHY…VYSRPIMNSS (98 aa)). Phosphoserine is present on residues serine 438 and serine 459.

As to quaternary structure, binds DNA as a monomer. Binds TLE1. Interacts with FOXA1 and FOXA3. Interacts with PRKDC. Interacts with AKT1. Interacts with TET1; this interaction may recruit TET1 to specific genomic loci to mediate their demethylation. Post-translationally, phosphorylation on Thr-156 abolishes binding to target promoters and subsequent transcription activation upon insulin stimulation. Restricted mainly to endoderm-derived tissues (lung, liver, stomach, and small intestine). Expressed in epididymis with region-specific expression pattern: no expression is observed in initial segment, low expression in proximal caput, gradiently higher levels of expression in middle and distal caput and highest level in corpus and cauda (at protein level).

It is found in the nucleus. It localises to the cytoplasm. Its function is as follows. Transcription factor that is involved in embryonic development, establishment of tissue-specific gene expression and regulation of gene expression in differentiated tissues. Is thought to act as a 'pioneer' factor opening the compacted chromatin for other proteins through interactions with nucleosomal core histones and thereby replacing linker histones at target enhancer and/or promoter sites. Binds DNA with the consensus sequence 5'-[AC]A[AT]T[AG]TT[GT][AG][CT]T[CT]-3'. In embryonic development is required for notochord formation. Involved in the development of multiple endoderm-derived organ systems such as the liver, pancreas and lungs; Foxa1 and Foxa2 seem to have at least in part redundant roles. FOXA1 and FOXA2 are essential for hepatic specification. FOXA1 and FOXA2 are required for morphogenesis and cell differentiation during formation of the lung. FOXA1 and FOXA2 are involved in bile duct formation; they positively regulate the binding glucocorticoid receptor/NR3C1 to the IL6 promoter. FOXA1 and FOXA2 regulate multiple phases of midbrain dopaminergic neuron development; they regulate expression of NEUROG2 at the beginning of mDA neurogenesis and of NR4A2 and EN1 in immature mDA neurons. Modulates the transcriptional activity of nuclear hormone receptors; inhibits AR-mediated transcription from the LCN5 promoter. Binds to fibrinogen beta promoter and is involved in IL6-induced fibrinogen beta transcriptional activation. Originally described as a transcription activator for a number of liver genes such as AFP, albumin, tyrosine aminotransferase, PEPCK, etc. Interacts with the cis-acting regulatory regions of these genes. Involved in glucose homeostasis; regulates the expression of genes important for glucose sensing in pancreatic beta-cells and glucose homeostasis. In pancreatic beta cells activates transcription of potassium channel subunits KCNJ11 and ABCC8. Involved in regulation of fat metabolism; activates transcriptional programs of lipid metabolism and ketogenesis at low insulin state. Involved in transcriptional regulation of MUC2 in the intestine. This is Hepatocyte nuclear factor 3-beta (Foxa2) from Mus musculus (Mouse).